Here is a 264-residue protein sequence, read N- to C-terminus: Thymidylate synthase (264 aa).

Arg-21 is a dUMP binding site. (6R)-5,10-methylene-5,6,7,8-tetrahydrofolate is bound at residue His-51. A dUMP-binding site is contributed by 126–127 (RR). Cys-146 acts as the Nucleophile in catalysis. DUMP-binding positions include 166-169 (RSGD), Asn-177, and 207-209 (HLY). Asp-169 is a binding site for (6R)-5,10-methylene-5,6,7,8-tetrahydrofolate. Ala-263 lines the (6R)-5,10-methylene-5,6,7,8-tetrahydrofolate pocket.

It belongs to the thymidylate synthase family. Bacterial-type ThyA subfamily. Homodimer.

It localises to the cytoplasm. The catalysed reaction is dUMP + (6R)-5,10-methylene-5,6,7,8-tetrahydrofolate = 7,8-dihydrofolate + dTMP. It functions in the pathway pyrimidine metabolism; dTTP biosynthesis. Functionally, catalyzes the reductive methylation of 2'-deoxyuridine-5'-monophosphate (dUMP) to 2'-deoxythymidine-5'-monophosphate (dTMP) while utilizing 5,10-methylenetetrahydrofolate (mTHF) as the methyl donor and reductant in the reaction, yielding dihydrofolate (DHF) as a by-product. This enzymatic reaction provides an intracellular de novo source of dTMP, an essential precursor for DNA biosynthesis. This Xanthomonas oryzae pv. oryzae (strain MAFF 311018) protein is Thymidylate synthase.